Here is a 21-residue protein sequence, read N- to C-terminus: Mast cell protease 3 (21 aa).

The Peptidase S1 domain maps to 1-21 (IIGGVESRPHSRPYMATLEIT). A disordered region spans residues 1–21 (IIGGVESRPHSRPYMATLEIT).

It belongs to the peptidase S1 family. Granzyme subfamily.

Functionally, thrombin inactivating protease. Displays chymotrypsin-like substrate specificity. In Mus musculus (Mouse), this protein is Mast cell protease 3 (Mcpt3).